The chain runs to 77 residues: Protein OPG195 (77 aa).

Residues 1 to 17 (MRSLIIVLLFPSIIYSM) form the signal peptide.

This sequence belongs to the chordopoxvirinae B9 protein family.

In Homo sapiens (Human), this protein is Protein OPG195 (OPG197).